The chain runs to 98 residues: NADH-ubiquinone oxidoreductase chain 4L (98 aa).

The next 3 membrane-spanning stretches (helical) occupy residues 1 to 21, 29 to 49, and 59 to 79; these read MTLI…GFLM, ALLC…LTVL, and MPII…ALLV.

This sequence belongs to the complex I subunit 4L family. In terms of assembly, core subunit of respiratory chain NADH dehydrogenase (Complex I) which is composed of 45 different subunits.

The protein resides in the mitochondrion inner membrane. It catalyses the reaction a ubiquinone + NADH + 5 H(+)(in) = a ubiquinol + NAD(+) + 4 H(+)(out). Core subunit of the mitochondrial membrane respiratory chain NADH dehydrogenase (Complex I) which catalyzes electron transfer from NADH through the respiratory chain, using ubiquinone as an electron acceptor. Part of the enzyme membrane arm which is embedded in the lipid bilayer and involved in proton translocation. In Inia geoffrensis (Amazon river dolphin), this protein is NADH-ubiquinone oxidoreductase chain 4L (MT-ND4L).